A 297-amino-acid chain; its full sequence is Ubiquinol oxidase 2, mitochondrial (297 aa).

Positions 17–43 (VALNDKQHDKKVENGGAAASGGGDGGD) are disordered. Residues 122–142 (AMMLETVAAVPGMVGGMLLHC) traverse the membrane as a helical segment. The Fe cation site is built by Glu126, Glu165, and His168. The chain crosses the membrane as a helical span at residues 184 to 204 (ALVFAVQGVFINAYFVTYLLS). The Fe cation site is built by Glu216, Glu267, and His270.

Belongs to the alternative oxidase family. In terms of assembly, homodimer; disulfide-linked. It depends on Fe cation as a cofactor.

The protein resides in the mitochondrion inner membrane. The catalysed reaction is 2 a ubiquinol + O2 = 2 a ubiquinone + 2 H2O. Catalyzes the cyanide-resistant oxidation of ubiquinol and the reduction of molecular oxygen to water, but does not translocate protons and consequently is not linked to oxidative phosphorylation. May increase respiration when the cytochrome respiratory pathway is restricted, or in response to low temperatures. This chain is Ubiquinol oxidase 2, mitochondrial (AOX2), found in Nicotiana tabacum (Common tobacco).